The chain runs to 122 residues: UPF0102 protein Smed_3545 (122 aa).

This sequence belongs to the UPF0102 family.

This is UPF0102 protein Smed_3545 from Sinorhizobium medicae (strain WSM419) (Ensifer medicae).